The primary structure comprises 241 residues: Ribose-5-phosphate isomerase A (241 aa).

Residues 29–32 (TGTT), 84–87 (DGAD), and 97–100 (KGGG) each bind substrate. The Proton acceptor role is filled by Glu-106. Lys-124 provides a ligand contact to substrate.

It belongs to the ribose 5-phosphate isomerase family. Homodimer.

The catalysed reaction is aldehydo-D-ribose 5-phosphate = D-ribulose 5-phosphate. It participates in carbohydrate degradation; pentose phosphate pathway; D-ribose 5-phosphate from D-ribulose 5-phosphate (non-oxidative stage): step 1/1. Its function is as follows. Catalyzes the reversible conversion of ribose-5-phosphate to ribulose 5-phosphate. This Thermoplasma acidophilum (strain ATCC 25905 / DSM 1728 / JCM 9062 / NBRC 15155 / AMRC-C165) protein is Ribose-5-phosphate isomerase A.